Reading from the N-terminus, the 199-residue chain is GTP cyclohydrolase-2 (199 aa).

Residue 49–53 coordinates GTP; it reads RIHSE. Residues Cys54, Cys65, and Cys67 each contribute to the Zn(2+) site. GTP-binding positions include Gln70, 92 to 94, and Thr114; that span reads EGR. The Proton acceptor role is filled by Asp126. Arg128 serves as the catalytic Nucleophile. GTP-binding residues include Thr149 and Lys154.

It belongs to the GTP cyclohydrolase II family. Homodimer. Zn(2+) is required as a cofactor.

It carries out the reaction GTP + 4 H2O = 2,5-diamino-6-hydroxy-4-(5-phosphoribosylamino)-pyrimidine + formate + 2 phosphate + 3 H(+). The protein operates within cofactor biosynthesis; riboflavin biosynthesis; 5-amino-6-(D-ribitylamino)uracil from GTP: step 1/4. In terms of biological role, catalyzes the conversion of GTP to 2,5-diamino-6-ribosylamino-4(3H)-pyrimidinone 5'-phosphate (DARP), formate and pyrophosphate. The protein is GTP cyclohydrolase-2 of Blochmanniella pennsylvanica (strain BPEN).